A 415-amino-acid chain; its full sequence is MGIKFAHLADVHLGYEQFNRSQRAEEFAKAFEDAIKICVDEKVDFIVIAGDLFNSSRPSPGTIKTAVKILQIPRDNNIPVFAIEGNHDRTQRGPSILHLLEDLGLLYVLGVRDEKVENEYLTSEKTKAGWLVKGMYKDVEIHGMKYMSAAWFEGNIELFKSMFRPEGDAILVLHQGVREITENNYPNYSSELSLSDLPKGYLYYALGHIHKRFELTYDDAPVVYPGSLERWDFGDYSLKLTWNGFQFKEEVGVDKGFYIVEDFKPRFIRINARDFIDVHIKGHSENEIKKAVKLAVPKIPRNSYVRFNIRWKRPVDVDWIKSIVNAEYVRVNPIIIKEERGPDGKDLDVKKFFTELEWKIIELASEKEYEYYLNQIIDLLASEEGKVEAKIDAKREEKKFVRPKNPGDIMAWVKG.

Mn(2+)-binding residues include D10, H12, D51, and N86. The active-site Proton donor is H87. Residues H174, H208, and H210 each coordinate Mn(2+).

This sequence belongs to the MRE11/RAD32 family. Homodimer. Forms a heterotetramer composed of two Mre11 subunits and two Rad50 subunits. It depends on Mn(2+) as a cofactor.

Its activity is regulated as follows. Nuclease activity is regulated by Rad50. In terms of biological role, part of the Rad50/Mre11 complex, which is involved in the early steps of DNA double-strand break (DSB) repair. The complex may facilitate opening of the processed DNA ends to aid in the recruitment of HerA and NurA. Mre11 binds to DSB ends and has both double-stranded 3'-5' exonuclease activity and single-stranded endonuclease activity. This is DNA double-strand break repair protein Mre11 from Pyrococcus abyssi (strain GE5 / Orsay).